Reading from the N-terminus, the 635-residue chain is Threonine--tRNA ligase (635 aa).

Residues 1-61 form the TGS domain; sequence MVSIRLPDGS…DRDASLAIVT (61 aa). A catalytic region spans residues 242–533; it reads DHRKLGKQLD…LIEHHAGAMP (292 aa). Positions 333, 384, and 510 each coordinate Zn(2+).

The protein belongs to the class-II aminoacyl-tRNA synthetase family. Homodimer. It depends on Zn(2+) as a cofactor.

Its subcellular location is the cytoplasm. It catalyses the reaction tRNA(Thr) + L-threonine + ATP = L-threonyl-tRNA(Thr) + AMP + diphosphate + H(+). In terms of biological role, catalyzes the attachment of threonine to tRNA(Thr) in a two-step reaction: L-threonine is first activated by ATP to form Thr-AMP and then transferred to the acceptor end of tRNA(Thr). Also edits incorrectly charged L-seryl-tRNA(Thr). The sequence is that of Threonine--tRNA ligase from Burkholderia orbicola (strain MC0-3).